The sequence spans 482 residues: Auxin transporter-like protein 4 (482 aa).

Residues 1–59 lie on the Cytoplasmic side of the membrane; that stretch reads MLSQNQAEEAIVTNMNETEQEGGSSLEEIAEDQSMFNFKSFLWHGGSVWDAWFSCASNQ. Residues 60–77 traverse the membrane as a helical segment; sequence VAQVLLTLPYSFSQLGMV. The Extracellular portion of the chain corresponds to 78–79; sequence SG. The helical transmembrane segment at 80 to 100 threads the bilayer; sequence IVFQIFYGLIGSWTAYLISVL. The Cytoplasmic segment spans residues 101–135; that stretch reads YVEYRARKEKENVNFKNHVIQWFEVLDGLLGRYWK. Residues 136-156 traverse the membrane as a helical segment; that stretch reads ALGLAFNCTFLLFGSVIQLIA. The Extracellular segment spans residues 157–172; that stretch reads CASNIYYINDKLDKRT. A helical membrane pass occupies residues 173–193; that stretch reads WTYIFGACCATTVFIPSFHNY. The Cytoplasmic segment spans residues 194–196; sequence RIW. A helical membrane pass occupies residues 197–217; it reads SFLGLGMTTYTAWYMAIAAIV. Over 218-232 the chain is Extracellular; that stretch reads NGQIENVVHSGPTKL. The chain crosses the membrane as a helical span at residues 233 to 253; sequence VLYFTGATNILYTFGGHAVTV. The Cytoplasmic segment spans residues 254-266; sequence EIMHAMWKPQKFK. The helical transmembrane segment at 267–287 threads the bilayer; it reads YIYFLATLYVFTLTIPSAVAV. The Extracellular portion of the chain corresponds to 288 to 314; the sequence is YWAFGDELLNHSNAFSLLPKNGFRDAA. Asn-297 is a glycosylation site (N-linked (GlcNAc...) asparagine). Residues 315–335 form a helical membrane-spanning segment; it reads VILMLIHQFITFGFACTPLYF. Residues 336 to 356 are Cytoplasmic-facing; sequence VWEKVIGMHDTKSICLRALVR. The helical transmembrane segment at 357–377 threads the bilayer; it reads LPVVIPIWFLAIIFPFFGPIN. Position 378 (Ser-378) is a topological domain, extracellular. A helical transmembrane segment spans residues 379–399; it reads AVGALLVTFTVYIIPALAHML. The Cytoplasmic portion of the chain corresponds to 400-422; it reads TYRTASARKNAVEKPPSFLPSWT. Residues 423–443 traverse the membrane as a helical segment; that stretch reads AVYVLNAFIVVWVLVVGFGFG. Residues 444-482 are Extracellular-facing; it reads GWASMTNFIRQIDTFGLFAKCYQCKPPTPPQAPSPHARH.

Belongs to the amino acid/polyamine transporter 2 family. Amino acid/auxin permease (AAAP) (TC 2.A.18.1) subfamily. As to expression, shoots and roots of nodulating plants, at low levels.

The protein localises to the cell membrane. Its function is as follows. Carrier protein involved in proton-driven auxin influx. Mediates the formation of auxin gradient from developing leaves (site of auxin biosynthesis) to tips by contributing to the loading of auxin in vascular tissues and facilitating acropetal (base to tip) auxin transport within inner tissues of the root apex, and basipetal (tip to base) auxin transport within outer tissues of the root apex. May be involved in lateral roots and nodules formation. This chain is Auxin transporter-like protein 4 (LAX4), found in Medicago truncatula (Barrel medic).